Consider the following 159-residue polypeptide: NADH-quinone oxidoreductase subunit I (159 aa).

2 consecutive 4Fe-4S ferredoxin-type domains span residues 51–80 and 90–119; these read RRYENGEERCIACKLCEAICPAQAIVIESD and TRYDIDMTKCIYCGLCQEACPVDAIVEGPN. 8 residues coordinate [4Fe-4S] cluster: Cys60, Cys63, Cys66, Cys70, Cys99, Cys102, Cys105, and Cys109.

Belongs to the complex I 23 kDa subunit family. As to quaternary structure, NDH-1 is composed of 14 different subunits. Subunits NuoA, H, J, K, L, M, N constitute the membrane sector of the complex. [4Fe-4S] cluster serves as cofactor.

It localises to the cell inner membrane. It catalyses the reaction a quinone + NADH + 5 H(+)(in) = a quinol + NAD(+) + 4 H(+)(out). Functionally, NDH-1 shuttles electrons from NADH, via FMN and iron-sulfur (Fe-S) centers, to quinones in the respiratory chain. The immediate electron acceptor for the enzyme in this species is believed to be ubiquinone. Couples the redox reaction to proton translocation (for every two electrons transferred, four hydrogen ions are translocated across the cytoplasmic membrane), and thus conserves the redox energy in a proton gradient. This chain is NADH-quinone oxidoreductase subunit I, found in Rickettsia prowazekii (strain Madrid E).